Reading from the N-terminus, the 552-residue chain is ATP synthase subunit alpha (552 aa).

Residue 173-180 (GDRQTGKT) participates in ATP binding. Residues 526 to 552 (ASPLDPSAVRKESIPVHRAPARTDDEG) are disordered. Residues 533 to 552 (AVRKESIPVHRAPARTDDEG) show a composition bias toward basic and acidic residues.

Belongs to the ATPase alpha/beta chains family. In terms of assembly, F-type ATPases have 2 components, CF(1) - the catalytic core - and CF(0) - the membrane proton channel. CF(1) has five subunits: alpha(3), beta(3), gamma(1), delta(1), epsilon(1). CF(0) has three main subunits: a(1), b(2) and c(9-12). The alpha and beta chains form an alternating ring which encloses part of the gamma chain. CF(1) is attached to CF(0) by a central stalk formed by the gamma and epsilon chains, while a peripheral stalk is formed by the delta and b chains.

It localises to the cell membrane. The catalysed reaction is ATP + H2O + 4 H(+)(in) = ADP + phosphate + 5 H(+)(out). In terms of biological role, produces ATP from ADP in the presence of a proton gradient across the membrane. The alpha chain is a regulatory subunit. The sequence is that of ATP synthase subunit alpha from Frankia alni (strain DSM 45986 / CECT 9034 / ACN14a).